A 248-amino-acid polypeptide reads, in one-letter code: Non-specific acid phosphatase (248 aa).

Positions 1-20 (MKKLLAVFCAGAFVSTSVFA) are cleaved as a signal peptide.

This sequence belongs to the class A bacterial acid phosphatase family.

It is found in the periplasm. The catalysed reaction is a phosphate monoester + H2O = an alcohol + phosphate. This Providencia stuartii protein is Non-specific acid phosphatase (phoN).